We begin with the raw amino-acid sequence, 1476 residues long: Cystic fibrosis transmembrane conductance regulator (1476 aa).

Residues 1–77 (MQKSPLEKAS…QLIHALRRCF (77 aa)) lie on the Cytoplasmic side of the membrane. Residues 78 to 98 (VWRFVFYGVLLYLGEVTKAVQ) form a helical membrane-spanning segment. One can recognise an ABC transmembrane type-1 1 domain in the interval 81 to 365 (FVFYGVLLYL…TAVQIWYDSL (285 aa)). Over 99–122 (PVLLGRIIASYDPDNTEERSIAIY) the chain is Extracellular. A helical transmembrane segment spans residues 123 to 146 (LGIGLCLLFIVRTLLLHPAIFGLH). Residues 147-195 (HIGMQMRIAMFSLIYKKTLKLSSRVLDKISIGQLISLLSNNLNKFDEGL) lie on the Cytoplasmic side of the membrane. Residues 196–216 (ALAHFIWIAPLQVVLLMGLLW) form a helical membrane-spanning segment. The Extracellular portion of the chain corresponds to 217-222 (DLLQFS). A helical transmembrane segment spans residues 223-243 (AFCGLGLLIVLVIFQAILGKM). The Cytoplasmic segment spans residues 244-298 (MVKYRDKRAAKINERLVITSEVIDNIYSVKAYCWESAMEKIIESLREEELKMTRR). A helical membrane pass occupies residues 299–319 (SAYMRFFTSSAFFFSGFFVVF). The Extracellular segment spans residues 320-339 (LSVLPYTVINGIVLRKIFTT). The helical transmembrane segment at 340 to 358 (ISFCIVLRMSVTRQFPTAV) threads the bilayer. Over 359-853 (QIWYDSLGMI…YLRYFTLHRG (495 aa)) the chain is Cytoplasmic. Residues Trp401, 458 to 465 (GSTGAGKT), and Gln493 each bind ATP. Positions 412-646 (VQLNNDDRKT…RPDFSSKLMG (235 aa)) constitute an ABC transporter 1 domain. Cys524 carries S-palmitoyl cysteine lipidation. 2 positions are modified to phosphoserine: Ser549 and Ser660. Positions 654-826 (TEERRSSILT…EEINEEDLKE (173 aa)) are disordered R region. Ser670 carries the phosphoserine; by PKA modification. Residues Ser684, Ser698, and Ser710 each carry the phosphoserine modification. Residue Thr715 is modified to Phosphothreonine. Phosphoserine is present on residues Ser732, Ser763, Ser785, Ser790, and Ser808. A helical membrane pass occupies residues 854-874 (LFAVLIWCVLVFLVEVAASLF). The ABC transmembrane type-1 2 domain occupies 854-1153 (LFAVLIWCVL…SSIDTDSLMR (300 aa)). Residues 875 to 913 (VLWLLKNNPVNGGNNGTKIANTSYVVVITSSSFYYIFYI) lie on the Extracellular side of the membrane. N-linked (GlcNAc...) asparagine glycans are attached at residues Asn889 and Asn895. The discontinuously helical transmembrane segment at 914–934 (YVGVADTLLALSLFRGLPLVH) threads the bilayer. The Cytoplasmic portion of the chain corresponds to 935-985 (TLITASKILHRKMLHSILHAPMSTFNKLKAGGILNRFSKDIAILDDFLPLT). Residues 986–1006 (IFDFIQLLFIVVGAIIVVSAL) traverse the membrane as a helical segment. The Extracellular segment spans residues 1007–1008 (QP). The helical transmembrane segment at 1009-1029 (YIFLATVPGLAVFILLRAYFL) threads the bilayer. At 1030–1090 (HTSQQLKQLE…TANWFMYLAT (61 aa)) the chain is on the cytoplasmic side. Residues 1091-1111 (LRWFQMRIDMIFVLFFIVVTF) traverse the membrane as a helical segment. Residues 1112–1125 (ISILTTGEGEGTTG) are Extracellular-facing. Residues 1126–1146 (IILTLAMNIMSTLQWAVNSSI) form a helical membrane-spanning segment. Over 1147-1476 (DTDSLMRSVS…TEEEVQETRL (330 aa)) the chain is Cytoplasmic. The region spanning 1208-1439 (VKDLTVKYVD…KSVFQRALSS (232 aa)) is the ABC transporter 2 domain. Residues Tyr1215 and 1240 to 1247 (GRTGSGKS) contribute to the ATP site. Positions 1382-1476 (RVLRQAFAGC…TEEEVQETRL (95 aa)) are interaction with GORASP2. Cys1391 is lipidated: S-palmitoyl cysteine. A phosphoserine mark is found at Ser1440 and Ser1452. The span at 1445-1456 (LFHGRHSSKQKP) shows a compositional bias: basic residues. Positions 1445 to 1476 (LFHGRHSSKQKPRTQITAVKEETEEEVQETRL) are disordered. Residues 1466–1476 (ETEEEVQETRL) are compositionally biased toward acidic residues. The PDZ-binding signature appears at 1474–1476 (TRL).

Belongs to the ABC transporter superfamily. ABCC family. CFTR transporter (TC 3.A.1.202) subfamily. In terms of assembly, monomer; does not require oligomerization for channel activity. May form oligomers in the membrane. Interacts with SLC4A7 through NHERF1. Interacts with SHANK2. Interacts with NHERF1 and MYO6. Interacts (via C-terminus) with GOPC (via PDZ domain); this promotes CFTR internalization and thereby decreases channel activity. Interacts with SLC4A7 through NHERF1. Found in a complex with MYO5B and RAB11A. Interacts with ANO1. Interacts with SLC26A8. Interacts with AHCYL1; the interaction increases CFTR activity. Interacts with CSE1L. The core-glycosylated form interacts with GORASP2 (via PDZ GRASP-type 1 domain) in respone to ER stress. Interacts with MARCHF2; the interaction leads to CFTR ubiqtuitination and degradation. Interacts with ADGRG2. N-glycosylated. In terms of processing, phosphorylated; cAMP treatment promotes phosphorylation and activates the channel. Dephosphorylation decreases the ATPase activity (in vitro). Phosphorylation at PKA sites activates the channel. Phosphorylation at PKC sites enhances the response to phosphorylation by PKA. Phosphorylated by AMPK; this inhibits channel activity. Post-translationally, ubiquitinated, leading to its degradation in the lysosome. Deubiquitination by USP10 in early endosomes enhances its endocytic recycling to the cell membrane. Ubiquitinated by RNF185 during ER stress. Ubiquitinated by MARCHF2. In terms of tissue distribution, detected in epithelial cells in nasopharynx, submandibular gland, pancreas and ileum (at protein level). Expressed in the epididymis. In the caput section of the epididymis, expressed uniformly on both the luminal and basolateral sides of the ducts and on sperm in the caput lumen (at protein level). In the cauda, detected along the luminal border but not continuously and is also expressed on the basolateral surface. Within the caudal lumen, detected on sperm.

It is found in the apical cell membrane. Its subcellular location is the early endosome membrane. It localises to the cell membrane. The protein resides in the recycling endosome membrane. The protein localises to the endoplasmic reticulum membrane. It is found in the nucleus. The catalysed reaction is ATP + H2O + closed Cl(-) channel = ADP + phosphate + open Cl(-) channel.. It carries out the reaction chloride(in) = chloride(out). The enzyme catalyses hydrogencarbonate(in) = hydrogencarbonate(out). It catalyses the reaction ATP + H2O = ADP + phosphate + H(+). In terms of biological role, epithelial ion channel that plays an important role in the regulation of epithelial ion and water transport and fluid homeostasis. Mediates the transport of chloride ions across the cell membrane. Possesses an intrinsic ATPase activity and utilizes ATP to gate its channel; the passive flow of anions through the channel is gated by cycles of ATP binding and hydrolysis by the ATP-binding domains. The ion channel is also permeable to HCO(3)(-); selectivity depends on the extracellular chloride concentration. Exerts its function also by modulating the activity of other ion channels and transporters. Contributes to the regulation of the pH and the ion content of the epithelial fluid layer. Modulates the activity of the epithelial sodium channel (ENaC) complex, in part by regulating the cell surface expression of the ENaC complex. May regulate bicarbonate secretion and salvage in epithelial cells by regulating the transporter SLC4A7. Can inhibit the chloride channel activity of ANO1. Plays a role in the chloride and bicarbonate homeostasis during sperm epididymal maturation and capacitation. The polypeptide is Cystic fibrosis transmembrane conductance regulator (Rattus norvegicus (Rat)).